A 403-amino-acid polypeptide reads, in one-letter code: Glutamyl-tRNA reductase 2 (403 aa).

Residues 47 to 50, S98, 103 to 105, and Q109 contribute to the substrate site; these read TCHR and ETD. Catalysis depends on C48, which acts as the Nucleophile. 177-182 serves as a coordination point for NADP(+); it reads GAGAVG.

Belongs to the glutamyl-tRNA reductase family. As to quaternary structure, homodimer.

The catalysed reaction is (S)-4-amino-5-oxopentanoate + tRNA(Glu) + NADP(+) = L-glutamyl-tRNA(Glu) + NADPH + H(+). Its pathway is porphyrin-containing compound metabolism; protoporphyrin-IX biosynthesis; 5-aminolevulinate from L-glutamyl-tRNA(Glu): step 1/2. Functionally, catalyzes the NADPH-dependent reduction of glutamyl-tRNA(Glu) to glutamate 1-semialdehyde (GSA). The polypeptide is Glutamyl-tRNA reductase 2 (Pyrobaculum arsenaticum (strain DSM 13514 / JCM 11321 / PZ6)).